The following is a 631-amino-acid chain: MSATKLTRREQRARAQHFIDTLEGTAFPNSKRIYLTGTHSGVRVPMREIQLSPTLIGGSKEQPQFEENEAIPVYDTSGPYGDPQIAINVQQGLAKLRQPWIDARGDTEELTVRSSDYTKARLADDGLDELRFSGVLTPKRAKAGRRVTQLHYARQGIITPEMEFIAIRENMGRERIRSEVLRHQHPGMSFGARLPENITAEFVRDEVAAGRAIIPANINHPESEPMIIGRNFLVKVNANIGNSAVTSSIEEEVEKLVWSTRWGADTVMDLSTGRYIHETREWILRNSPVPIGTVPIYQALEKVNGIAEDLTWEAFRDTLLEQAEQGVDYFTIHAGVLLRYVPMTAKRLTGIVSRGGSIMAKWCLSHHQENFLYQHFREICEICAAYDVSLSLGDGLRPGSIQDANDEAQFAELHTLGELTKIAWEYDVQVMIEGPGHVPMQMIRRNMTEELEHCHEAPFYTLGPLTTDIAPGYDHFTSGIGAAMIGWFGCAMLCYVTPKEHLGLPNKEDVKQGLITYKIAAHAADLAKGHPGAQIRDNAMSKARFEFRWEDQFNLALDPFTARAYHDETLPQESGKVAHFCSMCGPKFCSMKISQEVRDYAATQTIEMGMADMSENFRARGGEIYLRKEEA.

Residues N239, M268, Y297, H333, 353 to 355 (SRG), 394 to 397 (DGLR), and E433 contribute to the substrate site. Residue H437 coordinates Zn(2+). Residue Y460 participates in substrate binding. H501 serves as a coordination point for Zn(2+). C581, C584, and C589 together coordinate [4Fe-4S] cluster.

This sequence belongs to the ThiC family. Homodimer. It depends on [4Fe-4S] cluster as a cofactor.

It carries out the reaction 5-amino-1-(5-phospho-beta-D-ribosyl)imidazole + S-adenosyl-L-methionine = 4-amino-2-methyl-5-(phosphooxymethyl)pyrimidine + CO + 5'-deoxyadenosine + formate + L-methionine + 3 H(+). It functions in the pathway cofactor biosynthesis; thiamine diphosphate biosynthesis. In terms of biological role, catalyzes the synthesis of the hydroxymethylpyrimidine phosphate (HMP-P) moiety of thiamine from aminoimidazole ribotide (AIR) in a radical S-adenosyl-L-methionine (SAM)-dependent reaction. This chain is Phosphomethylpyrimidine synthase, found in Shigella boydii serotype 4 (strain Sb227).